Reading from the N-terminus, the 141-residue chain is MGLRRCTHFATLVMPLWALALFFLVVMQVPAQTTSLQISKEDRRLQELESKMGAESEQPNANLVGPSISRFGDRRNQKTISFGRRVPLISRPMIPIELDLLMDNDDERTKAKRFDDYGHMRFGKRGGDDQFDDYGHMRFGR.

Positions 1–31 (MGLRRCTHFATLVMPLWALALFFLVVMQVPA) are cleaved as a signal peptide. A propeptide spanning residues 32 to 73 (QTTSLQISKEDRRLQELESKMGAESEQPNANLVGPSISRFGD) is cleaved from the precursor. The segment at 49–69 (ESKMGAESEQPNANLVGPSIS) is disordered. At Phe82 the chain carries Phenylalanine amide. The propeptide occupies 86–111 (VPLISRPMIPIELDLLMDNDDERTKA). Tyr117 is modified (sulfotyrosine). Residue Phe122 is modified to Phenylalanine amide. Tyr134 carries the sulfotyrosine modification. The residue at position 139 (Phe139) is a Phenylalanine amide.

Belongs to the gastrin/cholecystokinin family.

The protein localises to the secreted. Drosulfakinin-0 (DSK 0) plays diverse biological roles including regulating gut muscle contraction in adults but not in larvae. The sequence is that of Drosulfakinins from Drosophila erecta (Fruit fly).